Here is a 59-residue protein sequence, read N- to C-terminus: Small, acid-soluble spore protein H (59 aa).

Belongs to the SspH family.

The protein localises to the spore core. In Alkaliphilus metalliredigens (strain QYMF), this protein is Small, acid-soluble spore protein H.